Consider the following 360-residue polypeptide: Phenylalanine--tRNA ligase alpha subunit (360 aa).

E260 contacts Mg(2+).

This sequence belongs to the class-II aminoacyl-tRNA synthetase family. Phe-tRNA synthetase alpha subunit type 1 subfamily. In terms of assembly, tetramer of two alpha and two beta subunits. Requires Mg(2+) as cofactor.

Its subcellular location is the cytoplasm. It catalyses the reaction tRNA(Phe) + L-phenylalanine + ATP = L-phenylalanyl-tRNA(Phe) + AMP + diphosphate + H(+). In Methylobacterium radiotolerans (strain ATCC 27329 / DSM 1819 / JCM 2831 / NBRC 15690 / NCIMB 10815 / 0-1), this protein is Phenylalanine--tRNA ligase alpha subunit.